The chain runs to 354 residues: Bergaptol O-methyltransferase (354 aa).

H121 lines the bergaptol pocket. S-adenosyl-L-homocysteine-binding residues include S174, G198, D221, and K255. H259 is a binding site for bergaptol. The active-site Proton acceptor is the H259.

It belongs to the class I-like SAM-binding methyltransferase superfamily. Cation-independent O-methyltransferase family. COMT subfamily.

The enzyme catalyses a 5-hydroxyfurocoumarin + S-adenosyl-L-methionine = a 5-methoxyfurocoumarin + S-adenosyl-L-homocysteine + H(+). The catalysed reaction is bergaptol + S-adenosyl-L-methionine = bergapten + S-adenosyl-L-homocysteine. Its activity is regulated as follows. Inhibited by Cu(2+), Ni(2+) and Co(2+). This is Bergaptol O-methyltransferase from Ammi majus (Bishop's weed).